The following is a 314-amino-acid chain: DDRGK domain-containing protein 1 (314 aa).

Residues 1 to 28 (MVAPVWYLVAAALLVGFILFLTRSRGRA) form a helical membrane-spanning segment. The interval 1 to 114 (MVAPVWYLVA…VEKPAETHLS (114 aa)) is mediates interaction with CDK5RAP3. Residues 29 to 314 (ASAGQEPLHN…GRESPAQAPA (286 aa)) are Cytoplasmic-facing. Disordered regions lie at residues 31-75 (AGQE…SRLQ) and 100-186 (QEEE…QREH). Residues S72 and S114 each carry the phosphoserine modification. Residues 118 to 216 (GAKKLRKLEE…MTEEQSQSFL (99 aa)) are mediates interaction with TRIP4. Residues 124-186 (KLEEKQARKA…AREEQAQREH (63 aa)) show a composition bias toward basic and acidic residues. Residues 195–209 (AFVVEEEGVGETMTE) carry the UFM1-interacting motif (UFIM) motif. The mediates interaction with UFL1 stretch occupies residues 216 to 314 (LTEFINYIKQ…GRESPAQAPA (99 aa)). The PCI domain maps to 229 to 273 (VLLEDLASQVGLRTQDTINRIQDLLAEGTITGVIDDRGKFIYITP). Residue K267 forms a Glycyl lysine isopeptide (Lys-Gly) (interchain with G-Cter in UFM1) linkage.

The protein belongs to the DDRGK1 family. As to quaternary structure, component of the UFM1 ribosome E3 ligase (UREL) complex, composed of UFL1, DDRGK1 and CDK5RAP3. Interacts with (unphosphorylated) ERN1/IRE1-alpha; interaction is dependent on UFM1 and takes place in response to endoplasmic reticulum stress, regulating ERN1/IRE1-alpha stability. Interacts with NFKBIA. Interacts with SOX9. In terms of processing, ubiquitinated. Ubiquitination probably triggers proteasomal degradation and is negatively regulated by UFL1, the enzyme involved in the ufmylation of DDRGK1. Ufmylated; conjugated to ubiquitin-like protein UFM1, probably at Lys-267 by UFL1. The relevance of ufmylation is however unclear: as DDRGK1 acts as a substrate adapters for ufmylation, it is uncertain whether ufmylation is a collateral effect of ufmylation process or is required to regulate its activity. In terms of tissue distribution, widely expressed (at protein level). In the brain, highest levels in medulla oblongata, followed by cerebral cortex, cerebellum and frontal lobe.

Its subcellular location is the endoplasmic reticulum membrane. Its function is as follows. Component of the UFM1 ribosome E3 ligase (UREL) complex, a multiprotein complex that catalyzes ufmylation of endoplasmic reticulum-docked proteins. The UREL complex plays a key role in ribosome recycling by mediating mono-ufmylation of the RPL26/uL24 subunit of the 60S ribosome following ribosome dissociation: ufmylation weakens the junction between post-termination 60S subunits and SEC61 translocons, promoting release and recycling of the large ribosomal subunit from the endoplasmic reticulum membrane. Ufmylation of RPL26/uL24 and subsequent 60S ribosome recycling either take place after normal termination of translation or after ribosome stalling during cotranslational translocation at the endoplasmic reticulum. Within the UREL complex, DDRGK1 tethers the complex to the endoplasmic reticulum membrane to restrict its activity to endoplasmic reticulum-docked ribosomes and acts as an ufmylation 'reader': following RPL26/uL24 ufmylation, DDRGK1 specifically binds to ufmylated RPL26/uL24 via its UFIM motif, resulting in stable association between the 60S ribosome and the UREL complex, followed by dissociation of the 60S ribosome subunit from the endoplasmic reticulum membrane. The UREL complex is also involved in reticulophagy in response to endoplasmic reticulum stress by promoting ufmylation of proteins such as CYB5R3 and RPN1, thereby promoting lysosomal degradation of ufmylated proteins. Ufmylation-dependent reticulophagy inhibits the unfolded protein response (UPR) by regulating ERN1/IRE1-alpha stability. Acts as a regulator of immunity by promoting differentiation of B-cells into plasma cells: acts by promoting expansion of the endoplasmic reticulum and regulating the unfolded protein response (UPR). May also be required for TRIP4 ufmylation. May play a role in NF-kappa-B-mediated transcription through regulation of the phosphorylation and the degradation of NFKBIA, the inhibitor of NF-kappa-B. Plays a role in cartilage development through SOX9, inhibiting the ubiquitin-mediated proteasomal degradation of this transcriptional regulator. Required for stabilization and ufmylation of ATG9A. The sequence is that of DDRGK domain-containing protein 1 from Homo sapiens (Human).